We begin with the raw amino-acid sequence, 549 residues long: CTP synthase (549 aa).

Residues methionine 1–leucine 270 form an amidoligase domain region. Serine 13 contributes to the CTP binding site. Serine 13 contacts UTP. ATP-binding positions include serine 14–isoleucine 19 and aspartate 71. Residues aspartate 71 and glutamate 144 each coordinate Mg(2+). CTP contacts are provided by residues aspartate 151–glutamate 153, lysine 191–glutamine 196, and lysine 227. Residues lysine 191–glutamine 196 and lysine 227 contribute to the UTP site. The Glutamine amidotransferase type-1 domain occupies threonine 295–glutamine 547. Glycine 356 provides a ligand contact to L-glutamine. Catalysis depends on cysteine 383, which acts as the Nucleophile; for glutamine hydrolysis. L-glutamine-binding positions include leucine 384 to glutamine 387, glutamate 407, and arginine 473. Catalysis depends on residues histidine 520 and glutamate 522.

This sequence belongs to the CTP synthase family. As to quaternary structure, homotetramer.

The catalysed reaction is UTP + L-glutamine + ATP + H2O = CTP + L-glutamate + ADP + phosphate + 2 H(+). It carries out the reaction L-glutamine + H2O = L-glutamate + NH4(+). The enzyme catalyses UTP + NH4(+) + ATP = CTP + ADP + phosphate + 2 H(+). It functions in the pathway pyrimidine metabolism; CTP biosynthesis via de novo pathway; CTP from UDP: step 2/2. Allosterically activated by GTP, when glutamine is the substrate; GTP has no effect on the reaction when ammonia is the substrate. The allosteric effector GTP functions by stabilizing the protein conformation that binds the tetrahedral intermediate(s) formed during glutamine hydrolysis. Inhibited by the product CTP, via allosteric rather than competitive inhibition. Catalyzes the ATP-dependent amination of UTP to CTP with either L-glutamine or ammonia as the source of nitrogen. Regulates intracellular CTP levels through interactions with the four ribonucleotide triphosphates. The chain is CTP synthase from Cupriavidus metallidurans (strain ATCC 43123 / DSM 2839 / NBRC 102507 / CH34) (Ralstonia metallidurans).